Reading from the N-terminus, the 122-residue chain is Fluoride-specific ion channel FluC (122 aa).

The next 4 membrane-spanning stretches (helical) occupy residues 1 to 21, 35 to 55, 67 to 87, and 98 to 118; these read MYAFFTIFIGGGLGAVSRHYL, WAILLINLLGCLGIGFFSAYL, FLLTGFLGGFTTYSTFTLNLI, and FLNLFLHLGGGILCCFVGFWL. Positions 74 and 77 each coordinate Na(+).

It belongs to the fluoride channel Fluc/FEX (TC 1.A.43) family.

It is found in the cell inner membrane. It catalyses the reaction fluoride(in) = fluoride(out). With respect to regulation, na(+) is not transported, but it plays an essential structural role and its presence is essential for fluoride channel function. Functionally, fluoride-specific ion channel. Important for reducing fluoride concentration in the cell, thus reducing its toxicity. The polypeptide is Fluoride-specific ion channel FluC (Dichelobacter nodosus (strain VCS1703A)).